The following is a 347-amino-acid chain: Ubiquitin thioesterase Otu1 (347 aa).

The region spanning phenylalanine 5–alanine 87 is the Ubiquitin-like domain. Residues lysine 8–alanine 89 form a UBX-like region. An OTU domain is found at leucine 150–glutamate 274. Positions valine 155–cysteine 161 are cys-loop. Residue aspartate 158 is part of the active site. Residue cysteine 161 is the Nucleophile of the active site. Residues isoleucine 213–isoleucine 223 form a variable-loop region. The interval phenylalanine 263–histidine 267 is his-loop. Residue isoleucine 266 participates in substrate binding. Histidine 267 is an active-site residue. An S2 site region spans residues leucine 290 to glutamine 295. The C2H2-type zinc finger occupies leucine 317–histidine 341. Histidine 341 is a catalytic residue.

The enzyme catalyses Thiol-dependent hydrolysis of ester, thioester, amide, peptide and isopeptide bonds formed by the C-terminal Gly of ubiquitin (a 76-residue protein attached to proteins as an intracellular targeting signal).. Its function is as follows. Hydrolase that can remove conjugated ubiquitin from proteins and may therefore play an important regulatory role at the level of protein turnover by preventing degradation. Involved in the regulation of DNA damage repair. The chain is Ubiquitin thioesterase Otu1 from Drosophila melanogaster (Fruit fly).